The primary structure comprises 265 residues: Glutamate racemase (265 aa).

Residues 12 to 13 (DS) and 44 to 45 (YG) contribute to the substrate site. Residue cysteine 75 is the Proton donor/acceptor of the active site. 76 to 77 (NT) is a substrate binding site. The active-site Proton donor/acceptor is the cysteine 186. Position 187–188 (187–188 (TH)) interacts with substrate.

It belongs to the aspartate/glutamate racemases family.

It catalyses the reaction L-glutamate = D-glutamate. Its pathway is cell wall biogenesis; peptidoglycan biosynthesis. Functionally, provides the (R)-glutamate required for cell wall biosynthesis. This is Glutamate racemase from Pseudomonas putida (strain ATCC 47054 / DSM 6125 / CFBP 8728 / NCIMB 11950 / KT2440).